Consider the following 101-residue polypeptide: Therostasin (101 aa).

Positions 1 to 19 are cleaved as a signal peptide; sequence MRGLAVLLLVACFCSVAFG. 2 consecutive Antistasin-like domains span residues 21-46 and 49-75; these read CENT…TCLC and CNDA…FCTC.

In terms of tissue distribution, salivary glands.

It localises to the secreted. Functionally, potent inhibitor of factor Xa. It also inhibits trypsin in a weaker manner. This is Therostasin from Theromyzon tessulatum (Duck leech).